A 602-amino-acid polypeptide reads, in one-letter code: UvrABC system protein C (602 aa).

The GIY-YIG domain maps to 19-97 (EEPGVYRMIG…IKSLAPRYNI (79 aa)). The region spanning 206–241 (SEVIDDLTARMHAAAERLAFEEAAACRDQVRVLQAV) is the UVR domain.

Belongs to the UvrC family. Interacts with UvrB in an incision complex.

Its subcellular location is the cytoplasm. Its function is as follows. The UvrABC repair system catalyzes the recognition and processing of DNA lesions. UvrC both incises the 5' and 3' sides of the lesion. The N-terminal half is responsible for the 3' incision and the C-terminal half is responsible for the 5' incision. The polypeptide is UvrABC system protein C (Aromatoleum aromaticum (strain DSM 19018 / LMG 30748 / EbN1) (Azoarcus sp. (strain EbN1))).